We begin with the raw amino-acid sequence, 314 residues long: Ferric-anguibactin transport system permease protein FatD (314 aa).

The next 10 membrane-spanning stretches (helical) occupy residues 1 to 21 (MTFR…FFGA), 49 to 69 (VALI…QHIV), 76 to 96 (PGTT…IVML), 103 to 123 (ERMF…IAII), 132 to 152 (ALVP…AEFY), 180 to 200 (IIFL…RFTV), 207 to 226 (IASN…LILV), 230 to 252 (VAVT…NLVA), 265 to 285 (IVAL…RVVL), and 288 to 308 (FEVP…LAFL).

The protein belongs to the binding-protein-dependent transport system permease family. FecCD subfamily. In terms of assembly, part of an iron transport system composed of the outer membrane receptor FatA, the periplasmic binding protein FatB and the inner membrane proteins FatC and FatD.

The protein localises to the cell inner membrane. In terms of biological role, involved in the uptake of iron in complex with the siderophore anguibactin. Responsible for the translocation of ferric-anguibactin across the cytoplasmic membrane. This Vibrio anguillarum (strain ATCC 68554 / 775) (Listonella anguillarum) protein is Ferric-anguibactin transport system permease protein FatD.